The sequence spans 379 residues: UDP-N-acetylglucosamine--N-acetylmuramyl-(pentapeptide) pyrophosphoryl-undecaprenol N-acetylglucosamine transferase (379 aa).

UDP-N-acetyl-alpha-D-glucosamine is bound by residues 10 to 12 (TAG), N124, R161, S195, and Q291.

The protein belongs to the glycosyltransferase 28 family. MurG subfamily.

Its subcellular location is the cell membrane. It catalyses the reaction di-trans,octa-cis-undecaprenyl diphospho-N-acetyl-alpha-D-muramoyl-L-alanyl-D-glutamyl-meso-2,6-diaminopimeloyl-D-alanyl-D-alanine + UDP-N-acetyl-alpha-D-glucosamine = di-trans,octa-cis-undecaprenyl diphospho-[N-acetyl-alpha-D-glucosaminyl-(1-&gt;4)]-N-acetyl-alpha-D-muramoyl-L-alanyl-D-glutamyl-meso-2,6-diaminopimeloyl-D-alanyl-D-alanine + UDP + H(+). It functions in the pathway cell wall biogenesis; peptidoglycan biosynthesis. In terms of biological role, cell wall formation. Catalyzes the transfer of a GlcNAc subunit on undecaprenyl-pyrophosphoryl-MurNAc-pentapeptide (lipid intermediate I) to form undecaprenyl-pyrophosphoryl-MurNAc-(pentapeptide)GlcNAc (lipid intermediate II). In Thermobifida fusca (strain YX), this protein is UDP-N-acetylglucosamine--N-acetylmuramyl-(pentapeptide) pyrophosphoryl-undecaprenol N-acetylglucosamine transferase.